Reading from the N-terminus, the 345-residue chain is Probable glucan endo-1,3-beta-glucosidase BG4 (345 aa).

Positions 1-22 (MLYSPKKLFLFFLSCIVLYVNS) are cleaved as a signal peptide. Asn23 and Asn119 each carry an N-linked (GlcNAc...) asparagine glycan. Catalysis depends on Glu128, which acts as the Proton donor. Glu267 functions as the Nucleophile in the catalytic mechanism. N-linked (GlcNAc...) asparagine glycosylation is found at Asn277 and Asn306.

The protein belongs to the glycosyl hydrolase 17 family.

The protein resides in the secreted. It catalyses the reaction Hydrolysis of (1-&gt;3)-beta-D-glucosidic linkages in (1-&gt;3)-beta-D-glucans.. In terms of biological role, may play a role in plant defense against pathogens. This chain is Probable glucan endo-1,3-beta-glucosidase BG4, found in Arabidopsis thaliana (Mouse-ear cress).